The chain runs to 240 residues: Ribonuclease PH (240 aa).

Phosphate-binding positions include R87 and 125–127; that span reads GTR.

This sequence belongs to the RNase PH family. As to quaternary structure, homohexameric ring arranged as a trimer of dimers.

The catalysed reaction is tRNA(n+1) + phosphate = tRNA(n) + a ribonucleoside 5'-diphosphate. Functionally, phosphorolytic 3'-5' exoribonuclease that plays an important role in tRNA 3'-end maturation. Removes nucleotide residues following the 3'-CCA terminus of tRNAs; can also add nucleotides to the ends of RNA molecules by using nucleoside diphosphates as substrates, but this may not be physiologically important. Probably plays a role in initiation of 16S rRNA degradation (leading to ribosome degradation) during starvation. This is Ribonuclease PH from Dictyoglomus turgidum (strain DSM 6724 / Z-1310).